The primary structure comprises 413 residues: Histidinol-phosphate aminotransferase, chloroplastic (413 aa).

A chloroplast-targeting transit peptide spans M1–M35. An N6-(pyridoxal phosphate)lysine modification is found at K273.

Belongs to the class-II pyridoxal-phosphate-dependent aminotransferase family. Histidinol-phosphate aminotransferase subfamily. As to quaternary structure, homodimer. Pyridoxal 5'-phosphate is required as a cofactor. In terms of tissue distribution, expressed in flowers, leaves, stems and roots.

It localises to the plastid. The protein localises to the chloroplast. The enzyme catalyses L-histidinol phosphate + 2-oxoglutarate = 3-(imidazol-4-yl)-2-oxopropyl phosphate + L-glutamate. It participates in amino-acid biosynthesis; L-histidine biosynthesis; L-histidine from 5-phospho-alpha-D-ribose 1-diphosphate: step 7/9. The chain is Histidinol-phosphate aminotransferase, chloroplastic (HPA) from Nicotiana plumbaginifolia (Leadwort-leaved tobacco).